Reading from the N-terminus, the 500-residue chain is NAD(P)H-quinone oxidoreductase chain 4, chloroplastic (500 aa).

15 helical membrane-spanning segments follow: residues 4–24, 35–55, 87–107, 113–130, 134–154, 167–187, 211–231, 242–262, 272–292, 305–325, 330–350, 364–384, 386–406, 411–431, and 462–482; these read FPWL…MLFL, YTIC…CYNF, IGTI…AFPV, LFHF…GSFS, LLLF…LLAM, FILY…GISL, ILFY…IPLH, HYST…YGLV, AHSM…IYAA, IAYS…SITD, GAIL…FLAG, MGGM…LSMA, LALP…GIIT, FLIF…LTPI, and LFLS…PDFV.

Belongs to the complex I subunit 4 family.

It localises to the plastid. Its subcellular location is the chloroplast thylakoid membrane. The catalysed reaction is a plastoquinone + NADH + (n+1) H(+)(in) = a plastoquinol + NAD(+) + n H(+)(out). It carries out the reaction a plastoquinone + NADPH + (n+1) H(+)(in) = a plastoquinol + NADP(+) + n H(+)(out). In Capsella bursa-pastoris (Shepherd's purse), this protein is NAD(P)H-quinone oxidoreductase chain 4, chloroplastic.